We begin with the raw amino-acid sequence, 175 residues long: Isopentenyl-diphosphate Delta-isomerase (175 aa).

2 residues coordinate Mn(2+): His-22 and His-29. The Nudix hydrolase domain occupies 27–160; that stretch reads KLHRAFSVLL…PAAYTPWLAE (134 aa). Residue Cys-64 is part of the active site. Residue Cys-64 participates in Mg(2+) binding. Residue His-66 participates in Mn(2+) binding. Glu-84 lines the Mg(2+) pocket. Residues Glu-110 and Glu-112 each coordinate Mn(2+). Residue Glu-112 is part of the active site.

This sequence belongs to the IPP isomerase type 1 family. Mg(2+) serves as cofactor. Requires Mn(2+) as cofactor.

The protein resides in the cytoplasm. It catalyses the reaction isopentenyl diphosphate = dimethylallyl diphosphate. The protein operates within isoprenoid biosynthesis; dimethylallyl diphosphate biosynthesis; dimethylallyl diphosphate from isopentenyl diphosphate: step 1/1. In terms of biological role, catalyzes the 1,3-allylic rearrangement of the homoallylic substrate isopentenyl (IPP) to its highly electrophilic allylic isomer, dimethylallyl diphosphate (DMAPP). This chain is Isopentenyl-diphosphate Delta-isomerase, found in Nocardia farcinica (strain IFM 10152).